We begin with the raw amino-acid sequence, 326 residues long: Aldo-keto reductase family 1 member D1 (326 aa).

Residues 22-26 and aspartate 52 each bind NADP(+); that span reads GLGTY. Tyrosine 26 provides a ligand contact to substrate. Positions 57, 88, 119, and 131 each coordinate substrate. Catalysis depends on tyrosine 57, which acts as the Proton donor. NADP(+)-binding positions include 168–169, glutamine 192, and 219–224; these read SN and YSPLGT. Tryptophan 230 serves as a coordination point for substrate. Residue 273 to 283 coordinates NADP(+); it reads KSTTPERIKEN.

This sequence belongs to the aldo/keto reductase family. The N-terminus is blocked.

The protein localises to the cytoplasm. It carries out the reaction 5beta-cholestan-3-one + NADP(+) = cholest-4-en-3-one + NADPH + H(+). The enzyme catalyses 4,5beta-dihydrocortisone + NADP(+) = cortisone + NADPH + H(+). It catalyses the reaction cortisol + NADPH + H(+) = 5beta-dihydrocortisol + NADP(+). The catalysed reaction is corticosterone + NADPH + H(+) = 5beta-dihydrocorticosterone + NADP(+). It carries out the reaction 7alpha,12alpha-dihydroxycholest-4-en-3-one + NADPH + H(+) = 7alpha,12alpha-dihydroxy-5beta-cholestan-3-one + NADP(+). The enzyme catalyses 7alpha-hydroxycholest-4-en-3-one + NADPH + H(+) = 7alpha-hydroxy-5beta-cholestan-3-one + NADP(+). It catalyses the reaction epitestosterone + NADPH + H(+) = 5beta-dihydroepitestosterone + NADP(+). The catalysed reaction is androst-4-ene-3,17-dione + NADPH + H(+) = 5beta-androstane-3,17-dione + NADP(+). It carries out the reaction progesterone + NADPH + H(+) = 5beta-pregnan-3,20-dione + NADP(+). The enzyme catalyses 21-hydroxyprogesterone + NADPH + H(+) = 5beta-dihydrodeoxycorticosterone + NADP(+). It catalyses the reaction aldosterone + NADPH + H(+) = 5beta-dihydroaldosterone + NADP(+). The catalysed reaction is 17beta-hydroxyandrosta-1,4-dien-3-one + NADPH + H(+) = 17beta-hydroxy-5beta-androst-1-en-3-one + NADP(+). It carries out the reaction 17beta-hydroxyestr-4-en-3-one + NADPH + H(+) = 17beta-hydroxy-5beta-estran-3-one + NADP(+). The enzyme catalyses 5beta-dihydrotestosterone + NADP(+) = testosterone + NADPH + H(+). It catalyses the reaction androst-4-ene-3,11,17-trione + NADPH + H(+) = 17beta-hydroxyandrost-4-ene-3,11-dione + NADP(+). Subject to inhibition by high substrate concentrations. Inhibited by testosterone concentrations above 10 uM. Inhibited by the primary and secondary bile acids chenodeoxycholic acid and ursodeoxycholic acid. Its function is as follows. Catalyzes the stereospecific NADPH-dependent reduction of the C4-C5 double bond of bile acid intermediates and steroid hormones carrying a delta(4)-3-one structure to yield an A/B cis-ring junction. This cis-configuration is crucial for bile acid biosynthesis and plays important roles in steroid metabolism. Capable of reducing a broad range of delta-(4)-3-ketosteroids from C18 (such as, 17beta-hydroxyestr-4-en-3-one) to C27 (such as, 7alpha-hydroxycholest-4-en-3-one). This is Aldo-keto reductase family 1 member D1 (Akr1d1) from Rattus norvegicus (Rat).